The primary structure comprises 212 residues: Uracil-DNA glycosylase (212 aa).

Asp-59 acts as the Proton acceptor in catalysis.

Belongs to the uracil-DNA glycosylase (UDG) superfamily. UNG family.

The protein localises to the cytoplasm. It carries out the reaction Hydrolyzes single-stranded DNA or mismatched double-stranded DNA and polynucleotides, releasing free uracil.. Excises uracil residues from the DNA which can arise as a result of misincorporation of dUMP residues by DNA polymerase or due to deamination of cytosine. The sequence is that of Uracil-DNA glycosylase from Ureaplasma urealyticum serovar 10 (strain ATCC 33699 / Western).